The sequence spans 474 residues: bZIP transcription factor hapX (474 aa).

Positions 1–10 (MSTSAGTPTS) are enriched in polar residues. A disordered region spans residues 1-82 (MSTSAGTPTS…RKAQNRAAQR (82 aa)). Residues 67–108 (DTPPTKRKAQNRAAQRAFRERRAARVGELEEQIKKIEEENER) form the bZIP domain. The interval 72-91 (KRKAQNRAAQRAFRERRAAR) is basic motif. Positions 95-102 (LEEQIKKI) are leucine-zipper. Disordered stretches follow at residues 201–242 (QMQT…TDFT), 282–317 (EDQP…GDVL), and 429–449 (TLPN…LTNR). Over residues 287 to 307 (DRSNQPSQLTKLPPIQNISQF) the composition is skewed to polar residues.

Belongs to the bZIP family. YAP subfamily.

The protein resides in the nucleus. Iron regulator crucial for the adaptation to iron starvation and iron excess, but is dispensable for virulence. SreA represses the expression of hapX and the siderophore system during iron sufficient conditions by an iron-sensing mechanism, while hapX represses sreA and activates the siderophore system during iron-limiting conditions, resulting in efficient iron uptake and inhibition of iron-consuming pathways. HapX targets include genes encoding a number of key iron-regulated factors such as the vacuolar iron importer cccA, as well as hemA, cycA and lysF involved in heme biosynthesis, respiration and lysine biosynthesis, respectively. Activation of the vacuolar iron importer cccA during high iron conditions is essential for iron detoxification. This is bZIP transcription factor hapX from Arthroderma benhamiae (strain ATCC MYA-4681 / CBS 112371) (Trichophyton mentagrophytes).